We begin with the raw amino-acid sequence, 251 residues long: Hydroxyacylglutathione hydrolase (251 aa).

Zn(2+)-binding residues include His-53, His-55, Asp-57, His-58, His-110, Asp-127, and His-165.

The protein belongs to the metallo-beta-lactamase superfamily. Glyoxalase II family. In terms of assembly, monomer. It depends on Zn(2+) as a cofactor.

The enzyme catalyses an S-(2-hydroxyacyl)glutathione + H2O = a 2-hydroxy carboxylate + glutathione + H(+). Its pathway is secondary metabolite metabolism; methylglyoxal degradation; (R)-lactate from methylglyoxal: step 2/2. Its function is as follows. Thiolesterase that catalyzes the hydrolysis of S-D-lactoyl-glutathione to form glutathione and D-lactic acid. In Escherichia fergusonii (strain ATCC 35469 / DSM 13698 / CCUG 18766 / IAM 14443 / JCM 21226 / LMG 7866 / NBRC 102419 / NCTC 12128 / CDC 0568-73), this protein is Hydroxyacylglutathione hydrolase.